Reading from the N-terminus, the 1377-residue chain is DNA-directed RNA polymerase subunit beta' (1377 aa).

4 residues coordinate Zn(2+): C60, C62, C75, and C78. 3 residues coordinate Mg(2+): D449, D451, and D453. Positions 777, 851, 858, and 861 each coordinate Zn(2+).

Belongs to the RNA polymerase beta' chain family. In terms of assembly, the RNAP catalytic core consists of 2 alpha, 1 beta, 1 beta' and 1 omega subunit. When a sigma factor is associated with the core the holoenzyme is formed, which can initiate transcription. The cofactor is Mg(2+). Zn(2+) is required as a cofactor.

The enzyme catalyses RNA(n) + a ribonucleoside 5'-triphosphate = RNA(n+1) + diphosphate. Functionally, DNA-dependent RNA polymerase catalyzes the transcription of DNA into RNA using the four ribonucleoside triphosphates as substrates. This Borreliella burgdorferi (strain ZS7) (Borrelia burgdorferi) protein is DNA-directed RNA polymerase subunit beta'.